A 399-amino-acid chain; its full sequence is Exodeoxyribonuclease 7 large subunit (399 aa).

It belongs to the XseA family. As to quaternary structure, heterooligomer composed of large and small subunits.

It is found in the cytoplasm. It catalyses the reaction Exonucleolytic cleavage in either 5'- to 3'- or 3'- to 5'-direction to yield nucleoside 5'-phosphates.. Functionally, bidirectionally degrades single-stranded DNA into large acid-insoluble oligonucleotides, which are then degraded further into small acid-soluble oligonucleotides. The sequence is that of Exodeoxyribonuclease 7 large subunit from Clostridium botulinum (strain Eklund 17B / Type B).